Here is a 58-residue protein sequence, read N- to C-terminus: MEPYQRYEELKKKTIKVVQKENYSIRYITQDEASNDLDEFYKQFAQHLLEAALERKAE.

This is SPbeta prophage-derived uncharacterized protein YotN (yotN) from Bacillus subtilis (strain 168).